We begin with the raw amino-acid sequence, 216 residues long: ATP phosphoribosyltransferase (216 aa).

The protein belongs to the ATP phosphoribosyltransferase family. Short subfamily. Heteromultimer composed of HisG and HisZ subunits.

It is found in the cytoplasm. It carries out the reaction 1-(5-phospho-beta-D-ribosyl)-ATP + diphosphate = 5-phospho-alpha-D-ribose 1-diphosphate + ATP. Its pathway is amino-acid biosynthesis; L-histidine biosynthesis; L-histidine from 5-phospho-alpha-D-ribose 1-diphosphate: step 1/9. In terms of biological role, catalyzes the condensation of ATP and 5-phosphoribose 1-diphosphate to form N'-(5'-phosphoribosyl)-ATP (PR-ATP). Has a crucial role in the pathway because the rate of histidine biosynthesis seems to be controlled primarily by regulation of HisG enzymatic activity. This chain is ATP phosphoribosyltransferase, found in Prochlorococcus marinus (strain MIT 9211).